The chain runs to 101 residues: Small ribosomal subunit protein uS14 (101 aa).

The protein belongs to the universal ribosomal protein uS14 family. In terms of assembly, part of the 30S ribosomal subunit. Contacts proteins S3 and S10.

In terms of biological role, binds 16S rRNA, required for the assembly of 30S particles and may also be responsible for determining the conformation of the 16S rRNA at the A site. The sequence is that of Small ribosomal subunit protein uS14 from Stutzerimonas stutzeri (strain A1501) (Pseudomonas stutzeri).